The sequence spans 130 residues: Small ribosomal subunit protein uS9 (130 aa).

The protein belongs to the universal ribosomal protein uS9 family.

This is Small ribosomal subunit protein uS9 from Tolumonas auensis (strain DSM 9187 / NBRC 110442 / TA 4).